We begin with the raw amino-acid sequence, 155 residues long: Small ribosomal subunit protein uS7 (155 aa).

It belongs to the universal ribosomal protein uS7 family. In terms of assembly, part of the 30S ribosomal subunit. Contacts proteins S9 and S11.

Functionally, one of the primary rRNA binding proteins, it binds directly to 16S rRNA where it nucleates assembly of the head domain of the 30S subunit. Is located at the subunit interface close to the decoding center, probably blocks exit of the E-site tRNA. This Helicobacter pylori (strain Shi470) protein is Small ribosomal subunit protein uS7.